The sequence spans 679 residues: Sodium-dependent phosphate transporter 1 (679 aa).

6 consecutive transmembrane segments (helical) span residues 21–41 (YLWM…SVGA), 62–82 (ACIL…AKVS), 100–120 (GLLM…QLVA), 158–178 (IVMS…ILFF), 203–223 (ACTV…LLGF), and 230–250 (GTIL…WFFV). Phosphoserine occurs at positions 265 and 269. The next 4 membrane-spanning stretches (helical) occupy residues 511 to 531 (VSLL…FAHG), 558 to 578 (VATP…GLWV), 600 to 620 (FSIE…GLPI), and 650 to 670 (IFMA…AIMA). Positions 550-558 (DTGDVSSKV) are a.

This sequence belongs to the inorganic phosphate transporter (PiT) (TC 2.A.20) family. As to expression, ubiquitously expressed.

It is found in the cell membrane. It carries out the reaction 2 Na(+)(out) + phosphate(out) = 2 Na(+)(in) + phosphate(in). In terms of biological role, sodium-phosphate symporter which preferentially transports the monovalent form of phosphate with a stoichiometry of two sodium ions per phosphate ion. May play a role in extracellular matrix and cartilage calcification as well as in vascular calcification. Essential for cell proliferation but this function is independent of its phosphate transporter activity. Functionally, (Microbial infection) May function as a retroviral receptor as it confers human cells susceptibility to infection to Gibbon Ape Leukemia Virus (GaLV), Simian sarcoma-associated virus (SSAV) and Feline leukemia virus subgroup B (FeLV-B) as well as 10A1 murine leukemia virus (10A1 MLV). The protein is Sodium-dependent phosphate transporter 1 (SLC20A1) of Homo sapiens (Human).